The sequence spans 31 residues: Cyclotide mech-4 (31 aa).

A cross-link (cyclopeptide (Gly-Asp)) is located at residues 1–31 (GSIPCGESCVYIPCISSLLGCSCKSKVCYKD). Disulfide bonds link Cys5–Cys21, Cys9–Cys23, and Cys14–Cys28.

This is a cyclic peptide. In terms of processing, contains 3 disulfide bonds.

Functionally, probably participates in a plant defense mechanism (Potential). Binds to and induces leakage in phospholipd membranes, particularly ones containing 1-palmitoyl-2-oleophosphatidylethanolamine (POPE). This is Cyclotide mech-4 from Melicytus chathamicus (Chatham Island mahoe).